The sequence spans 30 residues: Rothein 3.3 (30 aa).

The residue at position 30 (Leu30) is a Leucine amide.

In terms of tissue distribution, expressed by the skin dorsal glands.

The protein resides in the secreted. Its function is as follows. Lacks antimicrobial activity. Does not inhibit the formation of NO by neuronal nitric oxide. This chain is Rothein 3.3, found in Litoria rothii (Roth's tree frog).